The chain runs to 639 residues: Uridine permease (639 aa).

Residues 1-37 (MPVSDSGFDNSSKTMKDDTIPTEDYEEITKESEMGDA) form a disordered region. Over 1-162 (MPVSDSGFDN…LQLGLNWWQT (162 aa)) the chain is Cytoplasmic. Residue threonine 54 is modified to Phosphothreonine. Serine 56 bears the Phosphoserine mark. A helical transmembrane segment spans residues 163-180 (WICIWVGYTFVAFFLILG). Over 181 to 200 (SKVGNNYHISFPISSRVSFG) the chain is Extracellular. A helical transmembrane segment spans residues 201 to 225 (IYFSIWIVINRVVMACVWNSTLAYI). Topologically, residues 226 to 259 (GSQCVQLMLKAIFGTNLNTRIKDTIKNPNLTNFE) are cytoplasmic. The helical transmembrane segment at 260 to 276 (FMCFMVFWVACLPFLWF) threads the bilayer. Over 277–283 (PPDKLRH) the chain is Extracellular. Residues 284–305 (IFALKSAITPFAAFGFLIWTLC) traverse the membrane as a helical segment. At 306 to 367 (KAKGHLALGS…KTYKSSVYSQ (62 aa)) the chain is on the cytoplasmic side. Residues 368 to 392 (LIALPVCYAIISLIGILSVSAAYTL) traverse the membrane as a helical segment. Over 393–416 (YGVNYWSPLDILNRYLDNYTSGNR) the chain is Extracellular. Residues 417–435 (AGVFLISFIFAFDQLGANL) traverse the membrane as a helical segment. Residues 436-460 (SGNSIPAGTDLTALLPKFINIRRGS) lie on the Cytoplasmic side of the membrane. The helical transmembrane segment at 461 to 477 (YICALISLAICPWDLLS) threads the bilayer. Residues 478–483 (SSSKFT) lie on the Extracellular side of the membrane. The chain crosses the membrane as a helical span at residues 484–507 (TALAAYAVFLSAIAGVISADYFIV). Residues 508–537 (RKGYVNIFHCYTDKPGSYYMYNKYGTNWRA) are Cytoplasmic-facing. Residues 538-562 (VVAYIFGIAPNFAGFLGSVGVSVPI) form a helical membrane-spanning segment. Over 563-572 (GAMKVYYLNY) the chain is Extracellular. A helical transmembrane segment spans residues 573–590 (FVGYLLAALSYCILVYFY). Over 591–639 (PIKGIPGDAKITDRKWLEEWVEVEEFGTEREAFEEYGGVSTGYEKIRYI) the chain is Cytoplasmic. Lysine 635 is covalently cross-linked (Glycyl lysine isopeptide (Lys-Gly) (interchain with G-Cter in ubiquitin)).

This sequence belongs to the purine-cytosine permease (2.A.39) family.

The protein localises to the membrane. Functionally, high-affinity transport of uridine. This is Uridine permease (FUI1) from Saccharomyces cerevisiae (strain ATCC 204508 / S288c) (Baker's yeast).